The sequence spans 566 residues: CTP synthase (566 aa).

Residues 1–282 are amidoligase domain; sequence MSIKRAQLGG…DAYIIDQLGL (282 aa). Residue Ser-23 coordinates CTP. Ser-23 provides a ligand contact to UTP. Residues 24 to 29 and Asp-81 contribute to the ATP site; that span reads SLGKGL. The Mg(2+) site is built by Asp-81 and Glu-156. CTP-binding positions include 163–165, 203–208, and Lys-239; these read DIE and KTKPTQ. UTP contacts are provided by residues 203–208 and Lys-239; that span reads KTKPTQ. A Glutamine amidotransferase type-1 domain is found at 308–556; the sequence is TIGLVGKYID…IGAALDRQKA (249 aa). Gly-371 contributes to the L-glutamine binding site. Cys-398 serves as the catalytic Nucleophile; for glutamine hydrolysis. Residues 399–402, Glu-422, and Arg-482 each bind L-glutamine; that span reads LGLQ. Active-site residues include His-529 and Glu-531.

Belongs to the CTP synthase family. As to quaternary structure, homotetramer.

It carries out the reaction UTP + L-glutamine + ATP + H2O = CTP + L-glutamate + ADP + phosphate + 2 H(+). The catalysed reaction is L-glutamine + H2O = L-glutamate + NH4(+). It catalyses the reaction UTP + NH4(+) + ATP = CTP + ADP + phosphate + 2 H(+). The protein operates within pyrimidine metabolism; CTP biosynthesis via de novo pathway; CTP from UDP: step 2/2. With respect to regulation, allosterically activated by GTP, when glutamine is the substrate; GTP has no effect on the reaction when ammonia is the substrate. The allosteric effector GTP functions by stabilizing the protein conformation that binds the tetrahedral intermediate(s) formed during glutamine hydrolysis. Inhibited by the product CTP, via allosteric rather than competitive inhibition. In terms of biological role, catalyzes the ATP-dependent amination of UTP to CTP with either L-glutamine or ammonia as the source of nitrogen. Regulates intracellular CTP levels through interactions with the four ribonucleotide triphosphates. The polypeptide is CTP synthase (Leifsonia xyli subsp. xyli (strain CTCB07)).